We begin with the raw amino-acid sequence, 69 residues long: Brevinin-1CG5 (69 aa).

An N-terminal signal peptide occupies residues Met-1–Cys-22. Positions Glu-23–Glu-43 are cleaved as a propeptide — removed in mature form. The cysteines at positions 63 and 69 are disulfide-linked.

It belongs to the frog skin active peptide (FSAP) family. Brevinin subfamily. As to expression, expressed by the skin glands.

It is found in the secreted. Functionally, antimicrobial peptide active against a variety of Gram-positive and Gram-negative bacterial strains. Has antifungal activity against C.albicans ATCC 10231 and a slime mold isolate. Has hemolytic activity against human erythrocytes. This is Brevinin-1CG5 from Amolops chunganensis (Chungan torrent frog).